The chain runs to 477 residues: Glycogen synthase (477 aa).

K15 provides a ligand contact to ADP-alpha-D-glucose.

Belongs to the glycosyltransferase 1 family. Bacterial/plant glycogen synthase subfamily.

The enzyme catalyses [(1-&gt;4)-alpha-D-glucosyl](n) + ADP-alpha-D-glucose = [(1-&gt;4)-alpha-D-glucosyl](n+1) + ADP + H(+). It functions in the pathway glycan biosynthesis; glycogen biosynthesis. Its function is as follows. Synthesizes alpha-1,4-glucan chains using ADP-glucose. The polypeptide is Glycogen synthase (Serratia proteamaculans (strain 568)).